Reading from the N-terminus, the 242-residue chain is Haloacid dehalogenase-like hydrolase domain-containing protein 3 (242 aa).

Belongs to the HAD-like hydrolase superfamily.

This is Haloacid dehalogenase-like hydrolase domain-containing protein 3 (hdhd3) from Danio rerio (Zebrafish).